We begin with the raw amino-acid sequence, 884 residues long: MFNLLFSSSNQRRINSYAATVKKINSLEQKIGNLSDEELFTKTSYFKDELKKGVTLDYILPEAFSVVREAGCRVLGLRVFDVQIIGAIILHQGKIAEMKTGEGKTLVATLAGYLNALSGKGVHIVTVNDYLARRDSEWVGQIHKFLGLSVGLIQQDLSKAERKLAYQCDVTYVTNSELGFDYLKDNMVLSMSEIVQNKFAFCIIDEVDSILIDEARTPLIISGPSEAPVEKYTQTNLLSNILFKDVHYEVDEKARNIILTDKGTLFCEDHLSIDNLYDLENPWVHYILNAIKAKELFIKDVHYIIRDNQVVIVDEFTGRIMSGRRWSDGLHQAIEAKEQVPIQQENQTYASITYQNFFLLYPKLSGMTGTAKTEESELDKIYNLEVICVPTHRPLRRKEFSDLVYSNEYRKWEAIADECYDMYRAGRPTLVGTTSVEKSELLSKLLTEYKIPHSLLNAKPENVEKESDIIAQAGRQSSVTIATNMAGRGTDIILGGNPSYIAKSILIDLLIKKISVQNNLKLQQLSLKTQYCINQILKSLEDDLIYANLSVLELEKKISIACEQVAISRNLEIQLRKAYQLIFQEYENIFSQEKKYVAQAGGLHVIGTERHESRRIDNQLRGRAGRQGDPGSSRFFLSIEDNLLRIFGGNKIADLMQALNVDDDTPMESTLLSKSLEAAQKKVEAYFYDTRKQVFEYDQVLNSQRQAIYAERRRILESGYPRDCILQYAESTIDDIVNFCLTSKENNEKFVNLNTKIKYLLNATDTFFISKDLYSDSSELKKWITEQVRINYDLREAYLEQIKPGLIRQLEKYYLLQQIDNAWKDHLQKMGALRDAIGWRSYGQQDPLVEYKNEAFNLFIEMITHVKHTVVYAILRSRLMVKND.

Residues Gln83, 101–105, and Asp491 contribute to the ATP site; that span reads GEGKT.

This sequence belongs to the SecA family.

It localises to the plastid. It is found in the chloroplast stroma. The protein resides in the chloroplast thylakoid membrane. It carries out the reaction ATP + H2O + cellular proteinSide 1 = ADP + phosphate + cellular proteinSide 2.. Functionally, has a central role in coupling the hydrolysis of ATP to the transfer of proteins across the thylakoid membrane. The polypeptide is Protein translocase subunit SecA (Porphyra purpurea (Red seaweed)).